The sequence spans 493 residues: Putative glycerol-3-phosphate transporter 5 (493 aa).

12 helical membrane passes run 25–44, 83–103, 113–133, 145–165, 185–205, 207–227, 292–312, 328–348, 352–372, 375–395, 428–448, and 452–472; these read FTFH…ASFH, LGEL…FAGH, FLVF…LGYW, VQIV…SVVG, SVGN…GWGW, FVLP…FLVV, FCLF…PYYL, GILS…AGFI, IKAR…ALIM, VYGS…GLLV, AIID…AGYI, and GWNS…LFLV.

It belongs to the major facilitator superfamily. Organophosphate:Pi antiporter (OPA) (TC 2.A.1.4) family.

The protein localises to the membrane. The sequence is that of Putative glycerol-3-phosphate transporter 5 from Arabidopsis thaliana (Mouse-ear cress).